A 405-amino-acid polypeptide reads, in one-letter code: Acetate kinase (405 aa).

Asn7 serves as a coordination point for Mg(2+). Position 14 (Lys14) interacts with ATP. Arg92 contributes to the substrate binding site. Asp149 functions as the Proton donor/acceptor in the catalytic mechanism. Residues 209-213 (HLGNG) and 284-286 (DMR) contribute to the ATP site. Glu389 provides a ligand contact to Mg(2+).

This sequence belongs to the acetokinase family. Homodimer. The cofactor is Mg(2+). Mn(2+) serves as cofactor.

It is found in the cytoplasm. The catalysed reaction is acetate + ATP = acetyl phosphate + ADP. The protein operates within metabolic intermediate biosynthesis; acetyl-CoA biosynthesis; acetyl-CoA from acetate: step 1/2. Functionally, catalyzes the formation of acetyl phosphate from acetate and ATP. Can also catalyze the reverse reaction. In Borreliella burgdorferi (strain ZS7) (Borrelia burgdorferi), this protein is Acetate kinase.